The following is a 144-amino-acid chain: Virulence protein STM3117 (144 aa).

A VOC domain is found at 23–143; the sequence is RIDHLVLTVS…DGNLIEISQY (121 aa).

Its function is as follows. Is critically involved in promoting the replication of S.typhimurium cells inside host macrophages, suggesting a role in the establishment of bacterial colonization within macrophages. May be involved in the biosynthesis and modification of the peptidoglycan layer of the cell wall. The chain is Virulence protein STM3117 from Salmonella typhimurium (strain LT2 / SGSC1412 / ATCC 700720).